Reading from the N-terminus, the 268-residue chain is MKFYRTLLLFFASSFAFANSDLMLLHTYNNQPIEGWVMSEKLDGVRGYWNGKQLLTRQGQRLSPPAYFIKDFPPFAIDGELFSERNHFEEISTITKSFKGDGWEKLKLYVFDVPDAEGNLFERLAKLKAHLLEHPTTYIEIIEQIPVKDKTHLYQFLAQVENLQGEGVVVRNPNAPYERKRSSQILKLKTARGEECTVIAHHKGKGQFENVMGALTCKNHRGEFKIGSGFNLNERENPPPIGSVITYKYRGITNSGKPRFATYWREKK.

Lys41 (N6-AMP-lysine intermediate) is an active-site residue. 3 residues coordinate ATP: Phe111, Arg181, and Lys187.

This sequence belongs to the ATP-dependent DNA ligase family. It depends on a divalent metal cation as a cofactor.

It carries out the reaction ATP + (deoxyribonucleotide)n-3'-hydroxyl + 5'-phospho-(deoxyribonucleotide)m = (deoxyribonucleotide)n+m + AMP + diphosphate.. In terms of biological role, catalyzes efficient strand joining on a single nicked DNA. This chain is DNA ligase (ligA), found in Haemophilus influenzae (strain ATCC 51907 / DSM 11121 / KW20 / Rd).